The primary structure comprises 261 residues: tRNA pseudouridine synthase A (261 aa).

Residue Asp52 is the Nucleophile of the active site. Tyr110 serves as a coordination point for substrate.

It belongs to the tRNA pseudouridine synthase TruA family. In terms of assembly, homodimer.

The enzyme catalyses uridine(38/39/40) in tRNA = pseudouridine(38/39/40) in tRNA. In terms of biological role, formation of pseudouridine at positions 38, 39 and 40 in the anticodon stem and loop of transfer RNAs. This Blochmanniella pennsylvanica (strain BPEN) protein is tRNA pseudouridine synthase A.